The primary structure comprises 523 residues: Mediator of RNA polymerase II transcription subunit 1.2 (523 aa).

It belongs to the Mediator complex subunit 1 family. In terms of assembly, component of the Mediator complex.

Its subcellular location is the nucleus. Component of the Mediator complex, a coactivator involved in the regulated transcription of nearly all RNA polymerase II-dependent genes. Mediator functions as a bridge to convey information from gene-specific regulatory proteins to the basal RNA polymerase II transcription machinery. Mediator is recruited to promoters by direct interactions with regulatory proteins and serves as a scaffold for the assembly of a functional preinitiation complex with RNA polymerase II and the general transcription factors. The sequence is that of Mediator of RNA polymerase II transcription subunit 1.2 (mdt-1.2) from Caenorhabditis briggsae.